Consider the following 171-residue polypeptide: Photosystem I assembly protein Ycf3 (171 aa).

3 TPR repeats span residues Ala33–Pro66, Ser70–Leu103, and Gly118–Asn151.

This sequence belongs to the Ycf3 family.

It is found in the plastid. The protein localises to the chloroplast thylakoid membrane. Essential for the assembly of the photosystem I (PSI) complex. May act as a chaperone-like factor to guide the assembly of the PSI subunits. In Emiliania huxleyi (Coccolithophore), this protein is Photosystem I assembly protein Ycf3.